The chain runs to 314 residues: Methionyl-tRNA formyltransferase (314 aa).

110-113 (SLLP) contacts (6S)-5,6,7,8-tetrahydrofolate.

It belongs to the Fmt family.

The enzyme catalyses L-methionyl-tRNA(fMet) + (6R)-10-formyltetrahydrofolate = N-formyl-L-methionyl-tRNA(fMet) + (6S)-5,6,7,8-tetrahydrofolate + H(+). Functionally, attaches a formyl group to the free amino group of methionyl-tRNA(fMet). The formyl group appears to play a dual role in the initiator identity of N-formylmethionyl-tRNA by promoting its recognition by IF2 and preventing the misappropriation of this tRNA by the elongation apparatus. The polypeptide is Methionyl-tRNA formyltransferase (Dichelobacter nodosus (strain VCS1703A)).